The chain runs to 124 residues: Large ribosomal subunit protein uL18 (124 aa).

Belongs to the universal ribosomal protein uL18 family. As to quaternary structure, part of the 50S ribosomal subunit; part of the 5S rRNA/L5/L18/L25 subcomplex. Contacts the 5S and 23S rRNAs.

In terms of biological role, this is one of the proteins that bind and probably mediate the attachment of the 5S RNA into the large ribosomal subunit, where it forms part of the central protuberance. The polypeptide is Large ribosomal subunit protein uL18 (Caldicellulosiruptor saccharolyticus (strain ATCC 43494 / DSM 8903 / Tp8T 6331)).